We begin with the raw amino-acid sequence, 334 residues long: Aspartate carbamoyltransferase catalytic subunit (334 aa).

Residues arginine 71 and threonine 72 each coordinate carbamoyl phosphate. Residue lysine 99 coordinates L-aspartate. Residues arginine 121, histidine 151, and glutamine 154 each coordinate carbamoyl phosphate. Residues arginine 184 and arginine 239 each contribute to the L-aspartate site. 2 residues coordinate carbamoyl phosphate: glycine 280 and proline 281.

The protein belongs to the aspartate/ornithine carbamoyltransferase superfamily. ATCase family. As to quaternary structure, heterododecamer (2C3:3R2) of six catalytic PyrB chains organized as two trimers (C3), and six regulatory PyrI chains organized as three dimers (R2).

The enzyme catalyses carbamoyl phosphate + L-aspartate = N-carbamoyl-L-aspartate + phosphate + H(+). It functions in the pathway pyrimidine metabolism; UMP biosynthesis via de novo pathway; (S)-dihydroorotate from bicarbonate: step 2/3. Its function is as follows. Catalyzes the condensation of carbamoyl phosphate and aspartate to form carbamoyl aspartate and inorganic phosphate, the committed step in the de novo pyrimidine nucleotide biosynthesis pathway. This Pseudomonas syringae pv. syringae (strain B728a) protein is Aspartate carbamoyltransferase catalytic subunit.